The sequence spans 495 residues: Mesoderm induction early response protein 1 (495 aa).

Disordered regions lie at residues 1-25 (MAEPSLRTASPGGSAASDDHEFEPS) and 76-131 (GSTV…PSFT). Residues 83-94 (GEEEEDEEDMDN) are compositionally biased toward acidic residues. Residues 120–130 (QSSNDDPTPSF) are compositionally biased toward polar residues. The 99-residue stretch at 171 to 269 (KEIMVGSMFQ…EALRRLRFNV (99 aa)) folds into the ELM2 domain. In terms of domain architecture, SANT spans 274–326 (EELSVWTEEECRNFEQGLKAYGKDFHLIQANKVRTRSVGECVAFYYMWKKSER). Disordered stretches follow at residues 356-397 (DESE…NGVS) and 416-495 (HLNG…HGEV). Composition is skewed to polar residues over residues 387-397 (TASNNTQNGVS) and 420-440 (PTISSSDPSSNETDTNGYNRE). Residues 462–476 (TNERPIKRQRMDSPG) are compositionally biased toward basic and acidic residues. Positions 477–489 (KESTGSSEFSQEV) are enriched in polar residues.

It localises to the nucleus. Functionally, transcriptional repressor regulating the expression of a number of genes. Probably functions through recruitment of histone deacetylases involved in chromatin silencing. The polypeptide is Mesoderm induction early response protein 1 (mier1) (Xenopus laevis (African clawed frog)).